The chain runs to 279 residues: NADPH-dependent 7-cyano-7-deazaguanine reductase (279 aa).

86–88 (IES) provides a ligand contact to substrate. Position 88 to 89 (88 to 89 (SK)) interacts with NADPH. The Thioimide intermediate role is filled by Cys187. The active-site Proton donor is Asp194. 226–227 (HE) provides a ligand contact to substrate. 255–256 (RG) lines the NADPH pocket.

The protein belongs to the GTP cyclohydrolase I family. QueF type 2 subfamily. As to quaternary structure, homodimer.

It localises to the cytoplasm. It catalyses the reaction 7-aminomethyl-7-carbaguanine + 2 NADP(+) = 7-cyano-7-deazaguanine + 2 NADPH + 3 H(+). It participates in tRNA modification; tRNA-queuosine biosynthesis. Catalyzes the NADPH-dependent reduction of 7-cyano-7-deazaguanine (preQ0) to 7-aminomethyl-7-deazaguanine (preQ1). The polypeptide is NADPH-dependent 7-cyano-7-deazaguanine reductase (Haemophilus influenzae (strain PittGG)).